Here is a 694-residue protein sequence, read N- to C-terminus: Maintenance of telomere capping protein 4 (694 aa).

The segment covering 1-12 has biased composition (basic and acidic residues); that stretch reads MTHTNEHDHKAE. A disordered region spans residues 1-26; it reads MTHTNEHDHKAEQQQNGRGDTTTETV. Residues 13 to 26 show a composition bias toward polar residues; sequence QQQNGRGDTTTETV. Ser85 carries the phosphoserine modification. Positions 211 to 222 are enriched in low complexity; sequence YSPSNESSGSSS. Disordered stretches follow at residues 211-287, 325-437, and 465-511; these read YSPS…PEAQ, AKGS…TETY, and KTSN…PVGL. Over residues 223–243 the composition is skewed to basic residues; it reads SRRHHGHHIHPRRHLQHHSRV. The segment covering 244–257 has biased composition (polar residues); that stretch reads RTANSVHSNTQSLT. At Thr263 the chain carries Phosphothreonine. Residues 276 to 287 are compositionally biased toward polar residues; sequence MITKIATTPEAQ. A compositionally biased stretch (low complexity) spans 403–417; it reads SNGGTSRRSSNNGES. Polar residues predominate over residues 418 to 437; it reads ISTNSSKSSMGITFGNTETY. Residues 471 to 485 are compositionally biased toward basic and acidic residues; that stretch reads LRAEGEQALESDKEL. 2 positions are modified to phosphoserine: Ser481 and Ser491. Tyr493 is modified (phosphotyrosine). The helical transmembrane segment at 655-675 threads the bilayer; it reads RLLEFGIVLVLWTIWFLFSVL.

It localises to the membrane. The protein resides in the cytoplasm. This Saccharomyces cerevisiae (strain ATCC 204508 / S288c) (Baker's yeast) protein is Maintenance of telomere capping protein 4 (MTC4).